The following is a 193-amino-acid chain: Large ribosomal subunit protein uL18 (193 aa).

This sequence belongs to the universal ribosomal protein uL18 family. Part of the 50S ribosomal subunit. Contacts the 5S and 23S rRNAs.

Functionally, this is one of the proteins that bind and probably mediate the attachment of the 5S RNA into the large ribosomal subunit, where it forms part of the central protuberance. This is Large ribosomal subunit protein uL18 from Methanosphaera stadtmanae (strain ATCC 43021 / DSM 3091 / JCM 11832 / MCB-3).